Consider the following 351-residue polypeptide: Ribosomal RNA large subunit methyltransferase M (351 aa).

Residues S186, 219 to 222, D238, D258, and D274 each bind S-adenosyl-L-methionine; that span reads APGG. Catalysis depends on K303, which acts as the Proton acceptor.

The protein belongs to the class I-like SAM-binding methyltransferase superfamily. RNA methyltransferase RlmE family. RlmM subfamily. In terms of assembly, monomer.

Its subcellular location is the cytoplasm. It catalyses the reaction cytidine(2498) in 23S rRNA + S-adenosyl-L-methionine = 2'-O-methylcytidine(2498) in 23S rRNA + S-adenosyl-L-homocysteine + H(+). Catalyzes the 2'-O-methylation at nucleotide C2498 in 23S rRNA. The protein is Ribosomal RNA large subunit methyltransferase M of Xylella fastidiosa (strain M12).